The chain runs to 378 residues: Stimulator of interferon genes protein (378 aa).

The next 2 membrane-spanning stretches (helical) occupy residues 21–41 and 46–66; these read AAFVLLSTCLAALWELGEPAD and WLVLHLASEQLGLLFKGLCSL. Residues Cys-88 and Cys-91 are each lipidated (S-palmitoyl cysteine). Helical transmembrane passes span 89–109 and 114–134; these read LGCPIRCGVLLLLSCYCYTFL and GLPFAWIVALLGLSQALNILL. Residues 153–339 are cyclic dinucleotide-binding domain (CBD); that stretch reads FNVAHGLAWS…KHLKQEEKEE (187 aa). 2',3'-cGAMP is bound by residues Ser-162, Tyr-167, Arg-238, and Thr-263. Residues Ser-162, Tyr-167, 238–241, and Thr-263 contribute to the 3',3'-c-di-GMP site; that span reads RVYT. Residues Tyr-167, Arg-238, and Thr-263 each coordinate 2',3'-cUAMP. The segment at 339 to 378 is C-terminal tail (CTT); the sequence is EVTVGTMGSSGVLESSTLDKEPQLLISGMDQPLPLRTDVF. At Ser-354 the chain carries Phosphoserine. Thr-355 is subject to Phosphothreonine. Positions 362–365 match the pLxIS motif motif; the sequence is LLIS. Position 365 is a phosphoserine; by TBK1 (Ser-365).

This sequence belongs to the STING family. In terms of assembly, homodimer; forms a homodimer in absence of cyclic nucleotide (c-di-GMP or cGAMP). Homotetramer; in presence of cyclic nucleotide (c-di-GMP or cGAMP), forms tetramers and higher-order oligomers through side-by-side packing. Interacts (when phosphorylated) with IRF3; following activation and phosphorylation on the pLxIS motif by TBK1, recruits IRF3. Interacts with TBK1; when homodimer, leading to subsequent production of IFN-beta. Post-translationally, phosphorylation by TBK1 leads to activation and production of IFN-beta. Following cyclic nucleotide (c-di-GMP or cGAMP)-binding, activation and translocation from the endoplasmic reticulum, STING1 is phosphorylated by TBK1 at Ser-365 in the pLxIS motif. The phosphorylated pLxIS motif constitutes an IRF3-binding motif, leading to recruitment of the transcription factor IRF3 to induce type-I interferons and other cytokines. In contrast, lacks phosphorylation site at position 357, leading to reduced production of type-I interferons and other cytokines.

The protein resides in the endoplasmic reticulum membrane. It is found in the cytoplasm. The protein localises to the perinuclear region. Its subcellular location is the endoplasmic reticulum-Golgi intermediate compartment membrane. It localises to the golgi apparatus membrane. The protein resides in the cytoplasmic vesicle. It is found in the autophagosome membrane. The protein localises to the mitochondrion outer membrane. Its subcellular location is the cell membrane. The enzyme catalyses H(+)(in) = H(+)(out). Its function is as follows. Facilitator of innate immune signaling that acts as a sensor of cytosolic DNA from bacteria and viruses and promotes low production of type I interferon (IFN-alpha and IFN-beta). Compared to other mammals, STING1-dependent type I interferon induction is strongly reduced in bats, suggesting that the cGAS-STING pathway promotes a limited inflammatory response. Innate immune response is triggered in response to non-CpG double-stranded DNA from viruses and bacteria delivered to the cytoplasm. Acts by binding cyclic dinucleotides: recognizes and binds cyclic di-GMP (c-di-GMP), a second messenger produced by bacteria, cyclic UMP-AMP (2',3'-cUAMP), and cyclic GMP-AMP (cGAMP), a messenger produced by CGAS in response to DNA virus in the cytosol. Upon binding to c-di-GMP, cUAMP or cGAMP, STING1 oligomerizes, translocates from the endoplasmic reticulum and is phosphorylated by TBK1 on the pLxIS motif, leading to recruitment and subsequent activation of the transcription factor IRF3 to induce expression of type I interferon and exert a potent anti-viral state. In addition to promote the production of type I interferons, plays a direct role in autophagy. Following cGAMP-binding, STING1 buds from the endoplasmic reticulum into COPII vesicles, which then form the endoplasmic reticulum-Golgi intermediate compartment (ERGIC). The ERGIC serves as the membrane source for WIPI2 recruitment and LC3 lipidation, leading to formation of autophagosomes that target cytosolic DNA or DNA viruses for degradation by the lysosome. Promotes autophagy by acting as a proton channel that directs proton efflux from the Golgi to facilitate MAP1LC3B/LC3B lipidation. The autophagy- and interferon-inducing activities can be uncoupled and autophagy induction is independent of TBK1 phosphorylation. This Rhinolophus ferrumequinum (Greater horseshoe bat) protein is Stimulator of interferon genes protein.